An 86-amino-acid chain; its full sequence is WNACTKQSDCEEDECCLDNLFFKRPYCEKRYGAEQRCSAAAVYKEDKDLYYFTCPCVPMYECLGKGSLDENGNTVMKNPKCIMPTL.

Expressed by the venom gland.

The protein resides in the secreted. The sequence is that of Toxin CSTX-20 from Cupiennius salei (American wandering spider).